The following is an 87-amino-acid chain: Small ribosomal subunit protein bS20 (87 aa).

The protein belongs to the bacterial ribosomal protein bS20 family.

Binds directly to 16S ribosomal RNA. In Shigella flexneri serotype 5b (strain 8401), this protein is Small ribosomal subunit protein bS20.